Consider the following 241-residue polypeptide: Large ribosomal subunit protein uL3 (241 aa).

At Gln-157 the chain carries N5-methylglutamine.

It belongs to the universal ribosomal protein uL3 family. Part of the 50S ribosomal subunit. Forms a cluster with proteins L14 and L19. In terms of processing, methylated by PrmB.

Its function is as follows. One of the primary rRNA binding proteins, it binds directly near the 3'-end of the 23S rRNA, where it nucleates assembly of the 50S subunit. The chain is Large ribosomal subunit protein uL3 from Vesicomyosocius okutanii subsp. Calyptogena okutanii (strain HA).